The primary structure comprises 126 residues: Large ribosomal subunit protein uL22 (126 aa).

Belongs to the universal ribosomal protein uL22 family. As to quaternary structure, part of the 50S ribosomal subunit.

This protein binds specifically to 23S rRNA; its binding is stimulated by other ribosomal proteins, e.g. L4, L17, and L20. It is important during the early stages of 50S assembly. It makes multiple contacts with different domains of the 23S rRNA in the assembled 50S subunit and ribosome. In terms of biological role, the globular domain of the protein is located near the polypeptide exit tunnel on the outside of the subunit, while an extended beta-hairpin is found that lines the wall of the exit tunnel in the center of the 70S ribosome. The sequence is that of Large ribosomal subunit protein uL22 from Dinoroseobacter shibae (strain DSM 16493 / NCIMB 14021 / DFL 12).